Here is a 331-residue protein sequence, read N- to C-terminus: Probable tRNA pseudouridine synthase B (331 aa).

Asp66 serves as the catalytic Nucleophile. The region spanning 233-307 (INKIIVKDSA…NEEDNREKYK (75 aa)) is the PUA domain.

Belongs to the pseudouridine synthase TruB family. Type 2 subfamily.

The enzyme catalyses uridine(55) in tRNA = pseudouridine(55) in tRNA. Functionally, could be responsible for synthesis of pseudouridine from uracil-55 in the psi GC loop of transfer RNAs. This Methanococcus aeolicus (strain ATCC BAA-1280 / DSM 17508 / OCM 812 / Nankai-3) protein is Probable tRNA pseudouridine synthase B.